The sequence spans 357 residues: Probable protein phosphatase 2C 60 (357 aa).

The PPM-type phosphatase domain maps to 23–329 (RYGLSSMQGW…DNMTMILVRF (307 aa)). Residues Asp57, Gly58, Asp272, and Asp320 each coordinate Mn(2+). Residues 331–357 (NPTPSETELKPEASQAEGNHDEPSSSN) are disordered. Residues 348–357 (GNHDEPSSSN) are compositionally biased toward basic and acidic residues.

Belongs to the PP2C family. Requires Mg(2+) as cofactor. The cofactor is Mn(2+).

It carries out the reaction O-phospho-L-seryl-[protein] + H2O = L-seryl-[protein] + phosphate. It catalyses the reaction O-phospho-L-threonyl-[protein] + H2O = L-threonyl-[protein] + phosphate. The polypeptide is Probable protein phosphatase 2C 60 (Arabidopsis thaliana (Mouse-ear cress)).